The primary structure comprises 406 residues: S-adenosylmethionine synthase (406 aa).

ATP is bound at residue H16. Mg(2+) is bound at residue D18. E44 serves as a coordination point for K(+). L-methionine is bound by residues E57 and Q100. Residues 100–110 (QSVDIAQGVDR) form a flexible loop region. Residues 165-167 (DAK), D241, 247-248 (RK), A264, and K268 each bind ATP. D241 provides a ligand contact to L-methionine. L-methionine is bound at residue K272.

This sequence belongs to the AdoMet synthase family. Homotetramer; dimer of dimers. Requires Mg(2+) as cofactor. The cofactor is K(+).

It localises to the cytoplasm. It catalyses the reaction L-methionine + ATP + H2O = S-adenosyl-L-methionine + phosphate + diphosphate. It participates in amino-acid biosynthesis; S-adenosyl-L-methionine biosynthesis; S-adenosyl-L-methionine from L-methionine: step 1/1. Catalyzes the formation of S-adenosylmethionine (AdoMet) from methionine and ATP. The overall synthetic reaction is composed of two sequential steps, AdoMet formation and the subsequent tripolyphosphate hydrolysis which occurs prior to release of AdoMet from the enzyme. The protein is S-adenosylmethionine synthase of Chromohalobacter salexigens (strain ATCC BAA-138 / DSM 3043 / CIP 106854 / NCIMB 13768 / 1H11).